A 196-amino-acid polypeptide reads, in one-letter code: Small ribosomal subunit protein uS4c (196 aa).

Residues 1–14 (MSRYRGPRLKKIRR) are compositionally biased toward basic residues. Residues 1 to 43 (MSRYRGPRLKKIRRLGALPGLTRKTPKSGSNPKKKFHSGKKEQ) form a disordered region. The S4 RNA-binding domain maps to 89–169 (MRLDNILFRL…LPKHLTIDTL (81 aa)).

The protein belongs to the universal ribosomal protein uS4 family. In terms of assembly, part of the 30S ribosomal subunit. Contacts protein S5. The interaction surface between S4 and S5 is involved in control of translational fidelity.

Its subcellular location is the plastid. It localises to the chloroplast. Its function is as follows. One of the primary rRNA binding proteins, it binds directly to 16S rRNA where it nucleates assembly of the body of the 30S subunit. With S5 and S12 plays an important role in translational accuracy. The sequence is that of Small ribosomal subunit protein uS4c (rps4) from Melica uniflora (Wood melick grass).